Reading from the N-terminus, the 137-residue chain is MDQTNLRRCLATYFGDEKNINHILKKTAGPDQMVQIYQILTTIENPSHSEQDNFRRAVTMVKQNQLGWGHPIFQPEQQKISEENDFITCPYEVSEGVLRCGKCDCTKILWFSKQTRSMDEPTTIFASCSNCKTRWTE.

The segment at 85 to 136 (DFITCPYEVSEGVLRCGKCDCTKILWFSKQTRSMDEPTTIFASCSNCKTRWT) adopts a TFIIS-type zinc-finger fold. Zn(2+)-binding residues include cysteine 89, cysteine 103, cysteine 128, and cysteine 131.

This sequence belongs to the IIV-6 349L family.

The polypeptide is Putative transcription elongation factor S-II-like protein 055R (Aedes vexans (Inland floodwater mosquito)).